The sequence spans 1342 residues: DNA-directed RNA polymerase subunit beta (1342 aa).

This sequence belongs to the RNA polymerase beta chain family. In terms of assembly, the RNAP catalytic core consists of 2 alpha, 1 beta, 1 beta' and 1 omega subunit. When a sigma factor is associated with the core the holoenzyme is formed, which can initiate transcription.

It catalyses the reaction RNA(n) + a ribonucleoside 5'-triphosphate = RNA(n+1) + diphosphate. DNA-dependent RNA polymerase catalyzes the transcription of DNA into RNA using the four ribonucleoside triphosphates as substrates. In Tolumonas auensis (strain DSM 9187 / NBRC 110442 / TA 4), this protein is DNA-directed RNA polymerase subunit beta.